A 963-amino-acid chain; its full sequence is Protein translocase subunit SecA (963 aa).

ATP is bound by residues Gln87, 105–109 (GEGKT), and Asp512. 2 disordered regions span residues 868-909 (GPVM…EDFT) and 924-963 (QFVG…CHGS). The span at 874–886 (PDEEEDGDEDSVE) shows a compositional bias: acidic residues. Zn(2+)-binding residues include Cys949, Cys951, Cys960, and His961.

Belongs to the SecA family. In terms of assembly, monomer and homodimer. Part of the essential Sec protein translocation apparatus which comprises SecA, SecYEG and auxiliary proteins SecDF. Other proteins may also be involved. It depends on Zn(2+) as a cofactor.

It is found in the cell inner membrane. The protein resides in the cytoplasm. The catalysed reaction is ATP + H2O + cellular proteinSide 1 = ADP + phosphate + cellular proteinSide 2.. Functionally, part of the Sec protein translocase complex. Interacts with the SecYEG preprotein conducting channel. Has a central role in coupling the hydrolysis of ATP to the transfer of proteins into and across the cell membrane, serving as an ATP-driven molecular motor driving the stepwise translocation of polypeptide chains across the membrane. The chain is Protein translocase subunit SecA from Solibacter usitatus (strain Ellin6076).